Consider the following 330-residue polypeptide: Aspartate--ammonia ligase (330 aa).

The protein belongs to the class-II aminoacyl-tRNA synthetase family. AsnA subfamily. Homodimer.

Its subcellular location is the cytoplasm. It carries out the reaction L-aspartate + NH4(+) + ATP = L-asparagine + AMP + diphosphate + H(+). It functions in the pathway amino-acid biosynthesis; L-asparagine biosynthesis; L-asparagine from L-aspartate (ammonia route): step 1/1. The sequence is that of Aspartate--ammonia ligase from Salmonella typhi.